Reading from the N-terminus, the 690-residue chain is Elongation factor G (690 aa).

A tr-type G domain is found at 8–283; the sequence is SRCRNIGIMA…AVVDFLPSPS (276 aa). GTP contacts are provided by residues 17–24, 81–85, and 135–138; these read AHIDAGKT, DTPGH, and NKMD.

It belongs to the TRAFAC class translation factor GTPase superfamily. Classic translation factor GTPase family. EF-G/EF-2 subfamily.

It localises to the cytoplasm. In terms of biological role, catalyzes the GTP-dependent ribosomal translocation step during translation elongation. During this step, the ribosome changes from the pre-translocational (PRE) to the post-translocational (POST) state as the newly formed A-site-bound peptidyl-tRNA and P-site-bound deacylated tRNA move to the P and E sites, respectively. Catalyzes the coordinated movement of the two tRNA molecules, the mRNA and conformational changes in the ribosome. The chain is Elongation factor G from Anaplasma marginale (strain St. Maries).